We begin with the raw amino-acid sequence, 263 residues long: Acetylglutamate kinase (263 aa).

Substrate-binding positions include 48–49 (GG), Arg-70, and Asn-162.

Belongs to the acetylglutamate kinase family. ArgB subfamily.

It is found in the cytoplasm. The enzyme catalyses N-acetyl-L-glutamate + ATP = N-acetyl-L-glutamyl 5-phosphate + ADP. It participates in amino-acid biosynthesis; L-arginine biosynthesis; N(2)-acetyl-L-ornithine from L-glutamate: step 2/4. Catalyzes the ATP-dependent phosphorylation of N-acetyl-L-glutamate. The polypeptide is Acetylglutamate kinase (Vibrio parahaemolyticus serotype O3:K6 (strain RIMD 2210633)).